We begin with the raw amino-acid sequence, 255 residues long: Indole-3-glycerol phosphate synthase (255 aa).

Belongs to the TrpC family.

It catalyses the reaction 1-(2-carboxyphenylamino)-1-deoxy-D-ribulose 5-phosphate + H(+) = (1S,2R)-1-C-(indol-3-yl)glycerol 3-phosphate + CO2 + H2O. It functions in the pathway amino-acid biosynthesis; L-tryptophan biosynthesis; L-tryptophan from chorismate: step 4/5. The protein is Indole-3-glycerol phosphate synthase of Streptococcus pneumoniae (strain Taiwan19F-14).